A 354-amino-acid polypeptide reads, in one-letter code: UDP-N-acetylglucosamine--N-acetylmuramyl-(pentapeptide) pyrophosphoryl-undecaprenol N-acetylglucosamine transferase (354 aa).

UDP-N-acetyl-alpha-D-glucosamine-binding positions include 15-17 (TGG), Asn-127, Arg-163, Ser-191, Ile-244, 263-268 (ALTVSE), and Gln-288.

The protein belongs to the glycosyltransferase 28 family. MurG subfamily.

Its subcellular location is the cell inner membrane. The enzyme catalyses di-trans,octa-cis-undecaprenyl diphospho-N-acetyl-alpha-D-muramoyl-L-alanyl-D-glutamyl-meso-2,6-diaminopimeloyl-D-alanyl-D-alanine + UDP-N-acetyl-alpha-D-glucosamine = di-trans,octa-cis-undecaprenyl diphospho-[N-acetyl-alpha-D-glucosaminyl-(1-&gt;4)]-N-acetyl-alpha-D-muramoyl-L-alanyl-D-glutamyl-meso-2,6-diaminopimeloyl-D-alanyl-D-alanine + UDP + H(+). Its pathway is cell wall biogenesis; peptidoglycan biosynthesis. In terms of biological role, cell wall formation. Catalyzes the transfer of a GlcNAc subunit on undecaprenyl-pyrophosphoryl-MurNAc-pentapeptide (lipid intermediate I) to form undecaprenyl-pyrophosphoryl-MurNAc-(pentapeptide)GlcNAc (lipid intermediate II). The sequence is that of UDP-N-acetylglucosamine--N-acetylmuramyl-(pentapeptide) pyrophosphoryl-undecaprenol N-acetylglucosamine transferase from Aliivibrio fischeri (strain MJ11) (Vibrio fischeri).